A 286-amino-acid chain; its full sequence is Plasma membrane ascorbate-dependent reductase CYBRD1 (286 aa).

At 1–7 (MAMEGYW) the chain is on the cytoplasmic side. The chain crosses the membrane as a helical span at residues 8 to 32 (RFLALLGSALLVGFLSVIFALVWVL). In terms of domain architecture, Cytochrome b561 spans 15–220 (SALLVGFLSV…FGALIFWIVT (206 aa)). Residues 33–47 (HYREGLGWDGSALEF) are Extracellular-facing. A helical transmembrane segment spans residues 48-69 (NWHPVLMVTGFVFIQGIAIIVY). Heme b contacts are provided by histidine 50, arginine 70, and lysine 79. The Cytoplasmic portion of the chain corresponds to 70-78 (RLPWTWKCS). L-ascorbate is bound by residues lysine 79 and lysine 83. Residues 79–105 (KLLMKSIHAGLNAVAAILAIISVVAVF) traverse the membrane as a helical segment. Histidine 86 is a heme b binding site. Residues 106–118 (ENHNVNNIANMYS) are Extracellular-facing. Histidine 108 is a binding site for Fe(3+). Heme b is bound by residues 115–118 (NMYS) and histidine 120. A helical membrane pass occupies residues 119–144 (LHSWVGLIAVICYLLQLLSGFSVFLL). Topologically, residues 145-151 (PWAPLSL) are cytoplasmic. Residue arginine 152 coordinates L-ascorbate. The chain crosses the membrane as a helical span at residues 152 to 179 (RAFLMPIHVYSGIVIFGTVIATALMGLT). 2 residues coordinate heme b: histidine 159 and glutamate 180. Over 180-197 (EKLIFSLRDPAYSTFPPE) the chain is Extracellular. The helical transmembrane segment at 198–222 (GVFVNTLGLLILVFGALIFWIVTRP) threads the bilayer. The Cytoplasmic segment spans residues 223-286 (QWKRPKEPNS…LDEAGQRSTM (64 aa)). A heme b-binding site is contributed by lysine 225. Residues 229-268 (EPNSTILHPNGGTEQGARGSMPAYSGNNMDKSDSELNSEV) form a disordered region. Residue serine 232 is modified to Phosphoserine. Phosphothreonine is present on threonine 285.

Homodimer. Heme b serves as cofactor. As to expression, present in erythrocyte membranes (at protein level). Also expressed in respiratory epithelium.

The protein localises to the cell membrane. It is found in the apical cell membrane. It carries out the reaction Fe(3+)(out) + L-ascorbate(in) = monodehydro-L-ascorbate radical(in) + Fe(2+)(out) + H(+). It catalyses the reaction Cu(2+)(out) + L-ascorbate(in) = Cu(+)(out) + monodehydro-L-ascorbate radical(in) + H(+). The catalysed reaction is monodehydro-L-ascorbate radical(out) + L-ascorbate(in) = monodehydro-L-ascorbate radical(in) + L-ascorbate(out). With respect to regulation, activated by chelators like citrate, malate, and oxalate specially at alkaline pH. In terms of biological role, plasma membrane reductase that uses cytoplasmic ascorbate as an electron donor to reduce extracellular Fe(3+) into Fe(2+). Probably functions in dietary iron absorption at the brush border of duodenal enterocytes by producing Fe(2+), the divalent form of iron that can be transported into enterocytes. It is also able to reduce extracellular monodehydro-L-ascorbate and may be involved in extracellular ascorbate regeneration by erythrocytes in blood. May also act as a ferrireductase in airway epithelial cells. May also function as a cupric transmembrane reductase. In Homo sapiens (Human), this protein is Plasma membrane ascorbate-dependent reductase CYBRD1.